The following is a 1839-amino-acid chain: Adenylate cyclase (1839 aa).

6 disordered regions span residues 1-21 (MSSP…PQIE), 43-87 (ITTH…PRFS), 126-245 (TSLL…PIVS), 272-315 (KNTE…QWTA), 332-388 (KRKA…DSND), and 400-468 (ESSG…SFSK). The span at 165 to 211 (SQSNESRGTRSSIFFPSTSNSRRGSATSTMTSGSRSSHPPDTPPITS) shows a compositional bias: polar residues. Positions 212 to 221 (QQQEQQYDQQ) are enriched in low complexity. The span at 222-233 (RQQRPETREQEQ) shows a compositional bias: basic and acidic residues. Residues 332 to 355 (KRKAKHHHHYHHPQHPRPPHRKHY) are compositionally biased toward basic residues. Basic and acidic residues predominate over residues 361–376 (PIEDKAVVEKEQEPPE). Residues 407–428 (SASTQSVSSFSSGATGASGATG) show a composition bias toward low complexity. The 81-residue stretch at 494–574 (RRYAIRIFNI…LNGYLKSDPL (81 aa)) folds into the Ras-associating domain. 22 LRR repeats span residues 632–655 (TSDI…FIES), 659–679 (LSSL…VTDA), 681–702 (KLVS…IFKL), 704–726 (NLTI…SKLK), 727–748 (NLQL…INSC), 750–771 (NLLQ…INQL), 773–794 (KLAK…SQMK), 795–816 (NLRT…APNL), 817–834 (QNLF…DDLT), 835–856 (RLRT…GNYM), 858–879 (NMTS…LLSK), 882–903 (RLEK…INKL), 905–926 (RLIY…ISDL), 928–950 (SLKS…EDLE), 951–971 (LTSL…PAKF), 982–1004 (SLLF…VNTF), 1006–1027 (NLKT…KLQN), 1028–1048 (LTEL…AVQH), 1051–1073 (SLKV…SQLS), 1074–1096 (RLSV…HYDW), 1103–1124 (DLKY…LDPE), and 1135–1160 (LKQL…SVSI). Residues 1173–1439 (RYGVADTLGQ…DNITILCVSL (267 aa)) enclose the PPM-type phosphatase domain. Positions 1483 to 1620 (AIVFTDIKNS…PVVNKAARVS (138 aa)) constitute a Guanylate cyclase domain. The Mg(2+) site is built by Asp1488 and Asp1531.

Belongs to the adenylyl cyclase class-3 family. The cofactor is Mg(2+).

It catalyses the reaction ATP = 3',5'-cyclic AMP + diphosphate. In terms of biological role, plays essential roles in regulation of cellular metabolism by catalyzing the synthesis of a second messenger, cAMP. This is Adenylate cyclase (CYR1) from Lachancea kluyveri (Yeast).